The following is a 360-amino-acid chain: Sensor histidine kinase LiaS (360 aa).

The Cytoplasmic segment spans residues 1–15 (MRKKMLASLQWRAIR). Residues 16–36 (MTTGISLLLFVCLISFMMFYY) traverse the membrane as a helical segment. Residues 37-47 (RLDPLVLLSSS) are Extracellular-facing. Residues 48-68 (WFGIPFILILLLISVTVGFAS) traverse the membrane as a helical segment. Over 69-360 (GYMYGNRLKT…ENERDSSIID (292 aa)) the chain is Cytoplasmic. Residues 74–126 (NRLKTRIDTLIESILTFENGNFAYRIPPLGDDEIGLAADQLNEMAKRVELQVA) enclose the HAMP domain. Positions 153 to 346 (RLARDLHDAV…QIEVKVPIFP (194 aa)) constitute a Histidine kinase domain. The residue at position 159 (His-159) is a Phosphohistidine; by autocatalysis.

Its subcellular location is the cell membrane. The catalysed reaction is ATP + protein L-histidine = ADP + protein N-phospho-L-histidine.. Member of the two-component regulatory system LiaS/LiaR probably involved in response to a subset of cell wall-active antibiotics that interfere with the lipid II cycle in the cytoplasmic membrane (bacitracin, nisin, ramoplanin and vancomycin). Also seems to be involved in response to cationic antimicrobial peptides and secretion stress. Activates probably LiaR by phosphorylation. The polypeptide is Sensor histidine kinase LiaS (liaS) (Bacillus subtilis (strain 168)).